Here is a 256-residue protein sequence, read N- to C-terminus: Exosome complex component RRP41-like (256 aa).

It belongs to the RNase PH family. In terms of assembly, probable component of the RNA exosome complex. Highly expressed in imbibed seeds and young seedlings.

It is found in the cytoplasm. Its subcellular location is the nucleus. Functionally, non-catalytic component of the RNA exosome complex which has 3'-&gt;5' exoribonuclease activity and participates in a multitude of cellular RNA processing, maturation and degradation events. In vitro, is a processive phosphorolytic exonuclease and requires a single-stranded poly(A) tail on the substrate RNA for its activity. Plays an important role in seed germination and early seedling growth by mediating specific cytoplasmic mRNA decay of transcripts coding for the abscisic acid (ABA) biosynthetic enzymes NCED5 and NCED6, and the ABA signaling transcription factors ABI3 and ABI4. This Arabidopsis thaliana (Mouse-ear cress) protein is Exosome complex component RRP41-like.